A 78-amino-acid polypeptide reads, in one-letter code: Large ribosomal subunit protein bL28 (78 aa).

The protein belongs to the bacterial ribosomal protein bL28 family.

The chain is Large ribosomal subunit protein bL28 from Thermosynechococcus vestitus (strain NIES-2133 / IAM M-273 / BP-1).